A 159-amino-acid polypeptide reads, in one-letter code: MHKRAIYPGTFDPVTNGHADLIERAANLFEHVIIGIAANPSKQPRFTLAERVELLKTVTAHLDNVEVVGFSGLLVDFAKDQNASVLVRGLRAVSDFEYEFQLANMNRRLSPDLESVFLTPAEENSFISSTLVKEVALHGGDVSQFVHIEVANALTKKAK.

Thr10 serves as a coordination point for substrate. ATP-binding positions include 10–11 and His18; that span reads TF. Positions 42, 74, and 88 each coordinate substrate. Residues 89-91, Glu99, and 124-130 contribute to the ATP site; these read GLR and NSFISST.

It belongs to the bacterial CoaD family. Homohexamer. Mg(2+) serves as cofactor.

It is found in the cytoplasm. It carries out the reaction (R)-4'-phosphopantetheine + ATP + H(+) = 3'-dephospho-CoA + diphosphate. It functions in the pathway cofactor biosynthesis; coenzyme A biosynthesis; CoA from (R)-pantothenate: step 4/5. Functionally, reversibly transfers an adenylyl group from ATP to 4'-phosphopantetheine, yielding dephospho-CoA (dPCoA) and pyrophosphate. The sequence is that of Phosphopantetheine adenylyltransferase from Shewanella pealeana (strain ATCC 700345 / ANG-SQ1).